The sequence spans 2350 residues: Probable JmjC domain-containing histone demethylation protein 2C (2350 aa).

Disordered regions lie at residues 96–302 (TRAQ…LQEC) and 314–336 (PKDR…NDTH). The segment covering 98 to 127 (AQANSPRPAMNSQAAVPKQNTHQQQQQRSI) has biased composition (polar residues). Phosphoserine occurs at positions 135 and 138. Basic and acidic residues predominate over residues 141–160 (DEEKMKEDKYDCVSRGENPK). Basic residues predominate over residues 161 to 171 (GKNKHVVTKRR). Positions 172-189 (KPEEAEKRLSMKRLRTDN) are enriched in basic and acidic residues. Positions 190–200 (ASDASESSDAE) are enriched in low complexity. 2 positions are modified to phosphoserine: Ser-191 and Ser-194. The span at 257 to 280 (QEDKNHNEGEKPKSTDSHLQDKMT) shows a compositional bias: basic and acidic residues. A compositionally biased stretch (polar residues) spans 281 to 302 (LRSSEQATVADHNSNDSVLQEC). Phosphoserine occurs at positions 294 and 320. Thr-324 is modified (phosphothreonine). Ser-420, Ser-436, Ser-457, Ser-458, Ser-460, Ser-471, and Ser-762 each carry phosphoserine. 5 disordered regions span residues 426-486 (SVTE…NSQA), 747-766 (SSAE…PPLT), 859-883 (RENY…DKDV), 1030-1083 (RKES…DQSL), and 1422-1508 (EKVS…VPRS). Low complexity-rich tracts occupy residues 863–874 (SRVVPSSSSPKS) and 1034–1045 (SYSSLSPPTLTP). A compositionally biased stretch (polar residues) spans 1071–1083 (SQSNFKNSSDQSL). Over residues 1454-1463 (KRQPKPTYKK) the composition is skewed to basic residues. Residues 1464–1480 (KQNDLQKRKGEVEEDSK) are compositionally biased toward basic and acidic residues. The C6-type zinc finger occupies 1657–1682 (CDACEATLFNVHWVCRKCGFVACLDC). Over residues 1776 to 1818 (KTSVSLPESQQQNSPQKSQTNGNSSPGSASTDSRLTPPESQSP) the composition is skewed to polar residues. The tract at residues 1776–1874 (KTSVSLPESQ…PASQSNEQGS (99 aa)) is disordered. Ser-1800 carries the phosphoserine modification. A compositionally biased stretch (basic and acidic residues) spans 1826 to 1849 (AEQKSREEKQENKEFTLEREIKED). Residues 1855–1874 (SDSPNGSTSPPASQSNEQGS) are compositionally biased toward polar residues. Positions 1876–1880 (LRDLL) match the LXXLL motif motif. Residues 1933–1962 (PNKTSKINIKSEPNEEPKESSLPATDESNK) are disordered. Lys-1942 participates in a covalent cross-link: Glycyl lysine isopeptide (Lys-Gly) (interchain with G-Cter in SUMO2). The region spanning 2084 to 2308 (MPTRYEDFLR…QSFHLTQELR (225 aa)) is the JmjC domain. Positions 2146, 2148, and 2276 each coordinate Fe cation.

The protein belongs to the JHDM2 histone demethylase family. Requires Fe(2+) as cofactor.

The protein resides in the nucleus. Functionally, probable histone demethylase that specifically demethylates 'Lys-9' of histone H3, thereby playing a central role in histone code. Demethylation of Lys residue generates formaldehyde and succinate. May be involved in hormone-dependent transcriptional activation, by participating in recruitment to androgen-receptor target genes. The protein is Probable JmjC domain-containing histone demethylation protein 2C (Jmjd1c) of Mus musculus (Mouse).